Reading from the N-terminus, the 322-residue chain is Phosphatidylserine decarboxylase proenzyme (322 aa).

Active-site charge relay system; for autoendoproteolytic cleavage activity residues include Asp-90, His-147, and Ser-254. Ser-254 (schiff-base intermediate with substrate; via pyruvic acid; for decarboxylase activity) is an active-site residue. A Pyruvic acid (Ser); by autocatalysis modification is found at Ser-254. The tract at residues 294–322 (EVEPVPLPEEEIKAEHDASPLVDDKKDET) is disordered. Over residues 303 to 322 (EEIKAEHDASPLVDDKKDET) the composition is skewed to basic and acidic residues.

It belongs to the phosphatidylserine decarboxylase family. PSD-B subfamily. Prokaryotic type I sub-subfamily. In terms of assembly, heterodimer of a large membrane-associated beta subunit and a small pyruvoyl-containing alpha subunit. It depends on pyruvate as a cofactor. In terms of processing, is synthesized initially as an inactive proenzyme. Formation of the active enzyme involves a self-maturation process in which the active site pyruvoyl group is generated from an internal serine residue via an autocatalytic post-translational modification. Two non-identical subunits are generated from the proenzyme in this reaction, and the pyruvate is formed at the N-terminus of the alpha chain, which is derived from the carboxyl end of the proenzyme. The autoendoproteolytic cleavage occurs by a canonical serine protease mechanism, in which the side chain hydroxyl group of the serine supplies its oxygen atom to form the C-terminus of the beta chain, while the remainder of the serine residue undergoes an oxidative deamination to produce ammonia and the pyruvoyl prosthetic group on the alpha chain. During this reaction, the Ser that is part of the protease active site of the proenzyme becomes the pyruvoyl prosthetic group, which constitutes an essential element of the active site of the mature decarboxylase.

Its subcellular location is the cell membrane. It carries out the reaction a 1,2-diacyl-sn-glycero-3-phospho-L-serine + H(+) = a 1,2-diacyl-sn-glycero-3-phosphoethanolamine + CO2. It functions in the pathway phospholipid metabolism; phosphatidylethanolamine biosynthesis; phosphatidylethanolamine from CDP-diacylglycerol: step 2/2. Functionally, catalyzes the formation of phosphatidylethanolamine (PtdEtn) from phosphatidylserine (PtdSer). In Salmonella arizonae (strain ATCC BAA-731 / CDC346-86 / RSK2980), this protein is Phosphatidylserine decarboxylase proenzyme.